A 231-amino-acid polypeptide reads, in one-letter code: Transmembrane protein 225 (231 aa).

Topologically, residues 1–13 are cytoplasmic; the sequence is MVHILVRKVEATN. Residues 14–34 form a helical membrane-spanning segment; sequence MFFSSWTLVFLAVGIIIEEWA. Topologically, residues 35-67 are extracellular; it reads ELKLGPQKPTITHSPWICCTPLWPSDGLEVIRN. A helical membrane pass occupies residues 68-88; the sequence is ILIVVLSLSFMHNLLLGFEFT. Residues 89–97 are Cytoplasmic-facing; sequence YMIPQTKYT. A helical membrane pass occupies residues 98-118; sequence LIMTACLAFLTGILLLGALLL. Residues 119 to 135 lie on the Extracellular side of the membrane; sequence YHHMLRQGESVYYSSYK. A helical membrane pass occupies residues 136–156; sequence ISWIIFTAYLNVLFLFISGFL. Residues 157 to 231 are Cytoplasmic-facing; it reads SLLQYKQPID…IQARRVTWAL (75 aa). The short motif at 225 to 229 is the RVxF element; sequence RRVTW.

As to quaternary structure, interacts (via RVxF motif) with PPP1CC.

It is found in the cytoplasmic vesicle. The protein localises to the secretory vesicle. Its subcellular location is the acrosome membrane. Probably inhibits protein phosphatase 1 (PP1) in sperm via binding to catalytic subunit PPP1CC. This chain is Transmembrane protein 225 (TMEM225), found in Bos taurus (Bovine).